The following is a 696-amino-acid chain: Caprolactamase subunit alpha (696 aa).

The protein belongs to the HyuA family. In terms of assembly, the caprolactamase is a heterotetramer composed of two alpha subunits (CapA) and two beta subunits (CapB).

Activity is dependent on the presence of ATP and bicarbonate. The requirement for bicarbonate may be related to allosteric activation through conformational effects, but it is also conceivable that carboxyphosphate is formed and acts as a mediator in caprolactam activation, forming carboxy- or phospholactim. Functionally, component of a caprolactamase involved in the degradation of caprolactam, an industrial compound mainly used in the production of Nylon 6. Catalyzes the ATP-dependent hydrolysis of the caprolactam ring to form 6-aminocaproic acid (6-ACA). The alpha subunit is responsible for ATP-dependent substrate phosphorylation. The enzyme cannot use 5-oxoproline. This is Caprolactamase subunit alpha from Pseudomonas jessenii.